We begin with the raw amino-acid sequence, 314 residues long: Formimidoylglutamase (314 aa).

The Mn(2+) site is built by H127, D153, H155, D157, D245, and D247.

This sequence belongs to the arginase family. Mn(2+) serves as cofactor.

It carries out the reaction N-formimidoyl-L-glutamate + H2O = formamide + L-glutamate. Its pathway is amino-acid degradation; L-histidine degradation into L-glutamate; L-glutamate from N-formimidoyl-L-glutamate (hydrolase route): step 1/1. Its function is as follows. Catalyzes the conversion of N-formimidoyl-L-glutamate to L-glutamate and formamide. The protein is Formimidoylglutamase of Aeromonas salmonicida (strain A449).